The following is a 678-amino-acid chain: Methionine--tRNA ligase (678 aa).

Positions 14-24 match the 'HIGH' region motif; that stretch reads PYANGSIHLGH. Residues C145, C148, C158, and C161 each coordinate Zn(2+). A 'KMSKS' region motif is present at residues 331–335; the sequence is KMSKS. K334 contributes to the ATP binding site. Positions 576–678 constitute a tRNA-binding domain; sequence AFAAVDLRIA…SGAKPGQRVK (103 aa).

The protein belongs to the class-I aminoacyl-tRNA synthetase family. MetG type 1 subfamily. In terms of assembly, homodimer. Requires Zn(2+) as cofactor.

Its subcellular location is the cytoplasm. It catalyses the reaction tRNA(Met) + L-methionine + ATP = L-methionyl-tRNA(Met) + AMP + diphosphate. Is required not only for elongation of protein synthesis but also for the initiation of all mRNA translation through initiator tRNA(fMet) aminoacylation. The protein is Methionine--tRNA ligase of Pseudomonas aeruginosa (strain UCBPP-PA14).